Here is a 60-residue protein sequence, read N- to C-terminus: Large ribosomal subunit protein uL30 (60 aa).

It belongs to the universal ribosomal protein uL30 family. As to quaternary structure, part of the 50S ribosomal subunit.

This Leuconostoc mesenteroides subsp. mesenteroides (strain ATCC 8293 / DSM 20343 / BCRC 11652 / CCM 1803 / JCM 6124 / NCDO 523 / NBRC 100496 / NCIMB 8023 / NCTC 12954 / NRRL B-1118 / 37Y) protein is Large ribosomal subunit protein uL30.